The primary structure comprises 561 residues: Hemolysin transporter protein HpmB (561 aa).

The signal sequence occupies residues 1-17 (MKKKVVLLTLLSCFSTS). A POTRA domain is found at 77–150 (LPIKGVYIQG…GELGLYAIEG (74 aa)).

The protein belongs to the TPS (TC 1.B.20) family.

The protein resides in the cell outer membrane. In terms of biological role, interacts with the cell-bound hemolysin. Necessary for the extracellular secretion and activation of the hemolysin. Functionally, probable member of a two partner secretion pathway (TPS) in which it mediates the secretion of hemolysin. The polypeptide is Hemolysin transporter protein HpmB (hpmB) (Proteus mirabilis).